Consider the following 459-residue polypeptide: tRNA modification GTPase MnmE (459 aa).

Residues arginine 21, glutamate 84, and lysine 123 each coordinate (6S)-5-formyl-5,6,7,8-tetrahydrofolate. A TrmE-type G domain is found at 219 to 380 (GMLTVIVGQP…LEKEIKQRVY (162 aa)). A K(+)-binding site is contributed by asparagine 229. GTP contacts are provided by residues 229-234 (NVGKSS), 248-254 (TDIPGTT), and 273-276 (DTAG). Serine 233 is a Mg(2+) binding site. K(+)-binding residues include threonine 248, isoleucine 250, and threonine 253. Threonine 254 serves as a coordination point for Mg(2+). Lysine 459 serves as a coordination point for (6S)-5-formyl-5,6,7,8-tetrahydrofolate.

It belongs to the TRAFAC class TrmE-Era-EngA-EngB-Septin-like GTPase superfamily. TrmE GTPase family. In terms of assembly, homodimer. Heterotetramer of two MnmE and two MnmG subunits. It depends on K(+) as a cofactor.

The protein resides in the cytoplasm. Its function is as follows. Exhibits a very high intrinsic GTPase hydrolysis rate. Involved in the addition of a carboxymethylaminomethyl (cmnm) group at the wobble position (U34) of certain tRNAs, forming tRNA-cmnm(5)s(2)U34. In Desulfitobacterium hafniense (strain Y51), this protein is tRNA modification GTPase MnmE.